The sequence spans 575 residues: Serine/threonine-protein kinase YPK1 (575 aa).

Residues 1-53 are disordered; it reads MMSWKFGKKFKEGGFLSGKHHSSNNNSPSDTSRSTTPTPGNPHPEDAVKPPVP. Residues 23–38 show a composition bias toward low complexity; the sequence is SNNNSPSDTSRSTTPT. The 256-residue stretch at 245–500 folds into the Protein kinase domain; the sequence is FELLKVIGKG…AQDIKNHPFF (256 aa). ATP is bound by residues 251–259 and Lys274; that span reads IGKGSFGKV. Catalysis depends on Asp368, which acts as the Proton acceptor. The region spanning 502–573 is the AGC-kinase C-terminal domain; it reads KHINFTKLWN…SVSPLGESVG (72 aa). A phosphoserine mark is found at Ser543 and Ser562.

The protein belongs to the protein kinase superfamily. AGC Ser/Thr protein kinase family. RAC subfamily.

The catalysed reaction is L-seryl-[protein] + ATP = O-phospho-L-seryl-[protein] + ADP + H(+). It catalyses the reaction L-threonyl-[protein] + ATP = O-phospho-L-threonyl-[protein] + ADP + H(+). In terms of biological role, probable serine/threonine-protein kinase which may act in the sphingolipid-mediated signaling pathway. May act downstream of TORC2 (TOR complex 2) and PDK1 to regulate sphingolipid metabolism. The sequence is that of Serine/threonine-protein kinase YPK1 from Cryptococcus neoformans var. grubii serotype A (strain H99 / ATCC 208821 / CBS 10515 / FGSC 9487) (Filobasidiella neoformans var. grubii).